The primary structure comprises 257 residues: Thiazole synthase (257 aa).

Residue K96 is the Schiff-base intermediate with DXP of the active site. 1-deoxy-D-xylulose 5-phosphate is bound by residues G157, 184–185, and 206–207; these read AG and NT.

The protein belongs to the ThiG family. In terms of assembly, homotetramer. Forms heterodimers with either ThiH or ThiS.

The protein resides in the cytoplasm. The enzyme catalyses [ThiS sulfur-carrier protein]-C-terminal-Gly-aminoethanethioate + 2-iminoacetate + 1-deoxy-D-xylulose 5-phosphate = [ThiS sulfur-carrier protein]-C-terminal Gly-Gly + 2-[(2R,5Z)-2-carboxy-4-methylthiazol-5(2H)-ylidene]ethyl phosphate + 2 H2O + H(+). It functions in the pathway cofactor biosynthesis; thiamine diphosphate biosynthesis. Its function is as follows. Catalyzes the rearrangement of 1-deoxy-D-xylulose 5-phosphate (DXP) to produce the thiazole phosphate moiety of thiamine. Sulfur is provided by the thiocarboxylate moiety of the carrier protein ThiS. In vitro, sulfur can be provided by H(2)S. This chain is Thiazole synthase, found in Rhizobium etli (strain ATCC 51251 / DSM 11541 / JCM 21823 / NBRC 15573 / CFN 42).